The chain runs to 261 residues: NAD-capped RNA hydrolase NudC (261 aa).

A substrate-binding site is contributed by Arg-74. Positions 103, 106, 121, and 124 each coordinate Zn(2+). Tyr-129 provides a ligand contact to substrate. A Nudix hydrolase domain is found at 130 to 253 (PRIFPCIIVA…TIARALIEQT (124 aa)). The a divalent metal cation site is built by Ala-163, Glu-179, and Glu-183. Positions 164–185 (GFVEVGETLEQCVAREVKEETG) match the Nudix box motif. 197 to 204 (QPWAFPSS) serves as a coordination point for substrate. Glu-224 contributes to the a divalent metal cation binding site. Ala-246 contributes to the substrate binding site.

It belongs to the Nudix hydrolase family. NudC subfamily. In terms of assembly, homodimer. The cofactor is Mg(2+). Mn(2+) is required as a cofactor. Zn(2+) serves as cofactor.

The enzyme catalyses a 5'-end NAD(+)-phospho-ribonucleoside in mRNA + H2O = a 5'-end phospho-adenosine-phospho-ribonucleoside in mRNA + beta-nicotinamide D-ribonucleotide + 2 H(+). It catalyses the reaction NAD(+) + H2O = beta-nicotinamide D-ribonucleotide + AMP + 2 H(+). It carries out the reaction NADH + H2O = reduced beta-nicotinamide D-ribonucleotide + AMP + 2 H(+). Functionally, mRNA decapping enzyme that specifically removes the nicotinamide adenine dinucleotide (NAD) cap from a subset of mRNAs by hydrolyzing the diphosphate linkage to produce nicotinamide mononucleotide (NMN) and 5' monophosphate mRNA. The NAD-cap is present at the 5'-end of some mRNAs and stabilizes RNA against 5'-processing. Has preference for mRNAs with a 5'-end purine. Catalyzes the hydrolysis of a broad range of dinucleotide pyrophosphates. The protein is NAD-capped RNA hydrolase NudC of Vibrio vulnificus (strain CMCP6).